A 458-amino-acid polypeptide reads, in one-letter code: Argininosuccinate lyase (458 aa).

Belongs to the lyase 1 family. Argininosuccinate lyase subfamily.

The protein localises to the cytoplasm. It catalyses the reaction 2-(N(omega)-L-arginino)succinate = fumarate + L-arginine. It functions in the pathway amino-acid biosynthesis; L-arginine biosynthesis; L-arginine from L-ornithine and carbamoyl phosphate: step 3/3. The sequence is that of Argininosuccinate lyase from Actinobacillus pleuropneumoniae serotype 7 (strain AP76).